Reading from the N-terminus, the 277-residue chain is Co-chaperone protein DjlA (277 aa).

The Periplasmic segment spans residues 1-6 (MRYWGK). A helical transmembrane segment spans residues 7-31 (LLGLVLGVMYAPGVVGALLGLLVGH). Topologically, residues 32-277 (MVDRALGAKR…DLIKREKGFK (246 aa)) are cytoplasmic. The region spanning 211-277 (DACKVLGVNS…DLIKREKGFK (67 aa)) is the J domain.

In terms of assembly, homodimer.

It localises to the cell inner membrane. Its function is as follows. Regulatory DnaK co-chaperone. Direct interaction between DnaK and DjlA is needed for the induction of the wcaABCDE operon, involved in the synthesis of a colanic acid polysaccharide capsule, possibly through activation of the RcsB/RcsC phosphotransfer signaling pathway. The colanic acid capsule may help the bacterium survive conditions outside the host. In Yersinia pestis, this protein is Co-chaperone protein DjlA.